The chain runs to 69 residues: uncharacterized protein (69 aa).

This is an uncharacterized protein from Escherichia coli O157:H7.